The primary structure comprises 311 residues: Methionyl-tRNA formyltransferase (311 aa).

Position 110 to 113 (110 to 113) interacts with (6S)-5,6,7,8-tetrahydrofolate; it reads SLLP.

This sequence belongs to the Fmt family.

The catalysed reaction is L-methionyl-tRNA(fMet) + (6R)-10-formyltetrahydrofolate = N-formyl-L-methionyl-tRNA(fMet) + (6S)-5,6,7,8-tetrahydrofolate + H(+). Functionally, attaches a formyl group to the free amino group of methionyl-tRNA(fMet). The formyl group appears to play a dual role in the initiator identity of N-formylmethionyl-tRNA by promoting its recognition by IF2 and preventing the misappropriation of this tRNA by the elongation apparatus. This Streptococcus pneumoniae (strain P1031) protein is Methionyl-tRNA formyltransferase.